We begin with the raw amino-acid sequence, 460 residues long: Cysteine--tRNA ligase (460 aa).

Cys-28 serves as a coordination point for Zn(2+). Residues Met-30 to His-40 carry the 'HIGH' region motif. Zn(2+) contacts are provided by Cys-209, His-234, and Glu-238. Positions Lys-266–Ser-270 match the 'KMSKS' region motif. Lys-269 contributes to the ATP binding site.

It belongs to the class-I aminoacyl-tRNA synthetase family. Monomer. The cofactor is Zn(2+).

The protein resides in the cytoplasm. It carries out the reaction tRNA(Cys) + L-cysteine + ATP = L-cysteinyl-tRNA(Cys) + AMP + diphosphate. The polypeptide is Cysteine--tRNA ligase (Pseudomonas putida (strain ATCC 47054 / DSM 6125 / CFBP 8728 / NCIMB 11950 / KT2440)).